Consider the following 445-residue polypeptide: Fatty acid desaturase 3 (445 aa).

Residues 1–21 (MGGVGEPGPREGPAQPGAPLP) are disordered. Residues 1 to 133 (MGGVGEPGPR…DMKLFDASPT (133 aa)) are Cytoplasmic-facing. The region spanning 20–97 (LPTFCWEQIR…LQPLLIGELA (78 aa)) is the Cytochrome b5 heme-binding domain. Residues 134-154 (FFAFLLGHILAMEVLAWLLIY) form a helical membrane-spanning segment. Residues 155–159 (LLGPG) are Lumenal-facing. A helical membrane pass occupies residues 160 to 180 (WVPSALAAFILAISQAQSWCL). The Cytoplasmic portion of the chain corresponds to 181–263 (QHDLGHASIF…KRRYLPYNQQ (83 aa)). The Histidine box-1 signature appears at 182 to 186 (HDLGH). The Histidine box-2 motif lies at 219-223 (HFQHH). A helical transmembrane segment spans residues 264–284 (HLYFFLIGPPLLTLVNFEVEN). The Lumenal segment spans residues 285–306 (LAYMLVCMQWADLLWAASFYAR). Residues 307–327 (FFLSYLPFYGVPGVLLFFVAV) form a helical membrane-spanning segment. At 328 to 445 (RVLESHWFVW…DIWLDAYLHQ (118 aa)) the chain is on the cytoplasmic side. Positions 383–387 (QIEHH) match the Histidine box-3 motif.

This sequence belongs to the fatty acid desaturase type 1 family. In terms of tissue distribution, highly expressed in various organs and tissues including liver, kidney, brain, lung, pancreas, testis, ovary and skeletal muscle (at protein level).

Its subcellular location is the endoplasmic reticulum membrane. The enzyme catalyses an N-acylsphing-4-enine + 2 Fe(II)-[cytochrome b5] + O2 + 2 H(+) = an N-acyl-sphinga-4E,14Z-dienine + 2 Fe(III)-[cytochrome b5] + 2 H2O. The catalysed reaction is N-(hexanoyl)sphing-4-enine + 2 Fe(II)-[cytochrome b5] + O2 + 2 H(+) = N-hexanoyl-sphinga-4E,14Z-dienine + 2 Fe(III)-[cytochrome b5] + 2 H2O. It catalyses the reaction sphing-4-enine + 2 Fe(II)-[cytochrome b5] + O2 + 2 H(+) = sphinga-4E,14Z-dienine + 2 Fe(III)-[cytochrome b5] + 2 H2O. It carries out the reaction (11E)-octadecenoyl-CoA + 2 Fe(II)-[cytochrome b5] + O2 + 2 H(+) = (11E,13Z)-octadecadienoyl-CoA + 2 Fe(III)-[cytochrome b5] + 2 H2O. The enzyme catalyses N-acyl-1-deoxysphinganine + 2 Fe(II)-[cytochrome b5] + O2 + 2 H(+) = N-acyl-1-deoxysphing-14Z-enine + 2 Fe(III)-[cytochrome b5] + 2 H2O. The catalysed reaction is an N-acylsphinganine + 2 Fe(II)-[cytochrome b5] + O2 + 2 H(+) = an N-acylsphing-14Z-enine + 2 Fe(III)-[cytochrome b5] + 2 H2O. It functions in the pathway lipid metabolism; sphingolipid metabolism. It participates in lipid metabolism; polyunsaturated fatty acid biosynthesis. Functionally, mammals have different sphingoid bases that differ in their length and/or pattern of desaturation and hydroxyl groups. The predominant sphingoid base that comprises mammalian ceramides is sphing-4-enine (sphingosine or SPH) which has a trans (E) desaturation at carbon 4. FADS3 is a desaturase that introduces a cis (Z) double bond between carbon 14 and carbon 15 of the sphingoid base (also known as long chain base, LCB), producing LCBs such as sphinga-4,14-dienine (SPD, d18:2(4E,14Z)) from SPH. Prefers SPH-containing ceramides (N-acylsphing-4-enines) as substrates. Capable of metabolizing also the SPH in its free form. SPD ceramides occur widely in mammalian tissues and cells. Due to their unusual structure containing a cis double bond, SPD ceramides may have an opposite, negative role in lipid microdomain formation relative to conventional ceramides. Could be involved in the detoxification of 1-deoxy sphingolipids, by desaturating the cytotoxic 1-deoxysphinganine (1-deoxySA, m18:0), produced under pathological conditions, to 1-deoxysphingenine (1-deoxysphingosine, 1-deoxySO, m18:1). Although prefers SPH-containing ceramides (N-acylsphing-4-enines) as substrates, it also exhibits activity toward dihydrosphingosine-containing CERs (N-acylsphinganines) and produces 14Z-SPH-containing sphingolipids,which can be found in patients with DEGS1 mutations. Its desaturase mechanism involves an electron transfer facilitated by cytochrome b5. FADS3 also acts as a methyl-end fatty acyl coenzyme A (CoA) desaturase that introduces a cis double bond between the preexisting double bond and the terminal methyl group of the fatty acyl chain. Desaturates (11E)-octadecenoate (trans-vaccenoate, the predominant trans fatty acid in human milk) at carbon 13 to generate (11E,13Z)-octadecadienoate (also known as conjugated linoleic acid 11E,13Z-CLA). The chain is Fatty acid desaturase 3 from Homo sapiens (Human).